The sequence spans 70 residues: Small ribosomal subunit protein bS21 (70 aa).

It belongs to the bacterial ribosomal protein bS21 family.

The chain is Small ribosomal subunit protein bS21 from Laribacter hongkongensis (strain HLHK9).